The primary structure comprises 39 residues: Photosystem II reaction center protein J (39 aa).

A helical membrane pass occupies residues 7 to 27 (IPLWLVATVAGMGVITLLGIF).

It belongs to the PsbJ family. PSII is composed of 1 copy each of membrane proteins PsbA, PsbB, PsbC, PsbD, PsbE, PsbF, PsbH, PsbI, PsbJ, PsbK, PsbL, PsbM, PsbT, PsbX, PsbY, PsbZ, Psb30/Ycf12, peripheral proteins PsbO, CyanoQ (PsbQ), PsbU, PsbV and a large number of cofactors. It forms dimeric complexes.

The protein resides in the cellular thylakoid membrane. Its function is as follows. One of the components of the core complex of photosystem II (PSII). PSII is a light-driven water:plastoquinone oxidoreductase that uses light energy to abstract electrons from H(2)O, generating O(2) and a proton gradient subsequently used for ATP formation. It consists of a core antenna complex that captures photons, and an electron transfer chain that converts photonic excitation into a charge separation. The polypeptide is Photosystem II reaction center protein J (Cyanothece sp. (strain PCC 7425 / ATCC 29141)).